A 42-amino-acid chain; its full sequence is Crotamine-IV-3 (42 aa).

Intrachain disulfides connect Cys4–Cys37, Cys11–Cys31, and Cys19–Cys38.

It belongs to the crotamine-myotoxin family. In terms of assembly, monomer. Expressed by the venom gland.

The protein localises to the secreted. In terms of biological role, cationic peptide that possesses multiple functions. It acts as a cell-penetrating peptide (CPP), and as a potent voltage-gated potassium channel (Kv) inhibitor. It exhibits antimicrobial activities, and hind limb paralysis. It also induces potent blockade of neuromuscular transmission in young chicken biventer cervicis preparation and potent myotoxic effect. In mice, it induces myonecrosis, upon intramuscular or subcutaneous injections. This is Crotamine-IV-3 from Crotalus durissus cumanensis (South American rattlesnake).